Reading from the N-terminus, the 239-residue chain is Adenylate kinase 2 (239 aa).

Residue 29-34 participates in ATP binding; that stretch reads GSGKGT. An NMP region spans residues 49–78; the sequence is STGDILRAIIASGSELGQKVQKITESGGLV. Residues threonine 50, arginine 55, 76–78, 104–107, and glutamine 111 each bind AMP; these read GLV and GFPR. Residues 145–182 form an LID region; it reads GRLFHLASGRSYHELFNPPKVPMVDDITGDRLVHRSDD. ATP-binding positions include arginine 146 and 155–156; that span reads SY. AMP contacts are provided by arginine 179 and arginine 190.

Belongs to the adenylate kinase family. AK2 subfamily. As to quaternary structure, monomer. Requires Mg(2+) as cofactor.

The protein localises to the cytoplasm. It is found in the cytosol. It carries out the reaction AMP + ATP = 2 ADP. It functions in the pathway purine metabolism; purine nucleotide biosynthesis. In terms of biological role, catalyzes the reversible transfer of the terminal phosphate group between ATP and AMP. Plays an important role in cellular energy homeostasis and in adenine nucleotide metabolism. This is Adenylate kinase 2 from Schistosoma mansoni (Blood fluke).